Consider the following 388-residue polypeptide: Chorismate synthase (388 aa).

Residues arginine 39 and arginine 45 each coordinate NADP(+). FMN contacts are provided by residues 130–132, 251–252, glycine 296, 311–315, and arginine 337; these read RSS, NA, and KPIPT.

This sequence belongs to the chorismate synthase family. As to quaternary structure, homotetramer. The cofactor is FMNH2.

It carries out the reaction 5-O-(1-carboxyvinyl)-3-phosphoshikimate = chorismate + phosphate. It functions in the pathway metabolic intermediate biosynthesis; chorismate biosynthesis; chorismate from D-erythrose 4-phosphate and phosphoenolpyruvate: step 7/7. Its function is as follows. Catalyzes the anti-1,4-elimination of the C-3 phosphate and the C-6 proR hydrogen from 5-enolpyruvylshikimate-3-phosphate (EPSP) to yield chorismate, which is the branch point compound that serves as the starting substrate for the three terminal pathways of aromatic amino acid biosynthesis. This reaction introduces a second double bond into the aromatic ring system. This chain is Chorismate synthase, found in Streptococcus uberis (strain ATCC BAA-854 / 0140J).